We begin with the raw amino-acid sequence, 526 residues long: Neutrophil cytosol factor 2 (526 aa).

TPR repeat units follow at residues 37–70, 71–104, and 121–154; these read SRIC…DKHL, AVAY…LRGN, and CEVL…KSEP. A Phosphothreonine modification is found at T233. Residues 240 to 299 enclose the SH3 1 domain; the sequence is LEGEAHRVLFGFVPETKEELQVMPGNIVFVLKKGNDNWATVMFNGQKGLVPCNYLEPVEL. The span at 303–315 shows a compositional bias: low complexity; the sequence is PQQQPQEESSPQS. The segment at 303–346 is disordered; the sequence is PQQQPQEESSPQSDIPAPPSSKAPGRPQLSPGQKQKEEPKEVKL. Residues 336–345 show a composition bias toward basic and acidic residues; it reads KQKEEPKEVK. Positions 351–429 constitute a PB1 domain; the sequence is PYTLKVHYKY…YCLTLWCENT (79 aa). At S399 the chain carries Phosphoserine. Residues 433-458 form a disordered region; that stretch reads QGFPDEPKESEKADANNQTTEPQLKK. The segment covering 437–446 has biased composition (basic and acidic residues); sequence DEPKESEKAD. Positions 457–516 constitute an SH3 2 domain; it reads KKGSQVEALFSYEATQPEDLEFQEGDIILVLSKVNEEWLEGECKGKVGIFPKVFVEDCAT.

The protein belongs to the NCF2/NOXA1 family. In terms of assembly, component of the phagocyte NADPH oxidase complex composed of an obligatory core heterodimer formed by the membrane proteins CYBA and CYBB and the cytosolic regulatory subunits NCF1/p47-phox, NCF2/p67-phox, NCF4/p40-phox and the small GTPase RAC1 or RAC2. Part of a cytosolic complex composed at least by NCF1, NCF2 and NCF4. Interacts with NCF4. Interacts (via the C-terminal SH3 domain) with NCF1 (via C-terminus). Interacts with SYTL1 and RAC1. May interact with NOXO1. Interacts with S100A8 and calprotectin (S100A8/9). Interacts with GBP7 (via GB1/RHD3-type G domain). Interacts with CYBB; the interaction is enhanced in the presence of GBP7.

The protein localises to the cytoplasm. Functionally, subunit of the phagocyte NADPH oxidase complex that mediates the transfer of electrons from cytosolic NADPH to O2 to produce the superoxide anion (O2(-)). In the activated complex, electrons are first transferred from NADPH to flavin adenine dinucleotide (FAD) and subsequently transferred via two heme molecules to molecular oxygen, producing superoxide through an outer-sphere reaction. Activation of the NADPH oxidase complex is initiated by the assembly of cytosolic subunits of the NADPH oxidase complex with the core NADPH oxidase complex to form a complex at the plasma membrane or phagosomal membrane. This activation process is initiated by phosphorylation dependent binding of the cytosolic NCF1/p47-phox subunit to the C-terminus of CYBA/p22-phox. In Homo sapiens (Human), this protein is Neutrophil cytosol factor 2.